The following is a 283-amino-acid chain: Diaminopimelate epimerase (283 aa).

Residues N13 and N66 each contribute to the substrate site. The Proton donor role is filled by C75. Residues 76–77 (GN), N165, N198, and 216–217 (ER) each bind substrate. C225 (proton acceptor) is an active-site residue. Residue 226-227 (GT) participates in substrate binding.

Belongs to the diaminopimelate epimerase family. As to quaternary structure, homodimer.

It is found in the cytoplasm. The enzyme catalyses (2S,6S)-2,6-diaminopimelate = meso-2,6-diaminopimelate. It functions in the pathway amino-acid biosynthesis; L-lysine biosynthesis via DAP pathway; DL-2,6-diaminopimelate from LL-2,6-diaminopimelate: step 1/1. Its function is as follows. Catalyzes the stereoinversion of LL-2,6-diaminopimelate (L,L-DAP) to meso-diaminopimelate (meso-DAP), a precursor of L-lysine and an essential component of the bacterial peptidoglycan. In Acaryochloris marina (strain MBIC 11017), this protein is Diaminopimelate epimerase.